Reading from the N-terminus, the 833-residue chain is Piwi-like protein 2 (833 aa).

The region spanning 227-353 (RINRVLNDNS…IPGELCFLCG (127 aa)) is the PAZ domain. A disordered region spans residues 313–338 (PMRRERKKKDEEGVEKEKEKEAPEEK). Residues 320–338 (KKDEEGVEKEKEKEAPEEK) show a composition bias toward basic and acidic residues. The Piwi domain maps to 515 to 815 (KMALVFVPDD…LAELVGKVHK (301 aa)).

Belongs to the argonaute family. Piwi subfamily. Expressed in dividing adult stem cells.

Required for the production of functional progeny from adult somatic stem cells (neoblasts). The protein is Piwi-like protein 2 (wi-2) of Schmidtea mediterranea (Freshwater planarian flatworm).